The sequence spans 435 residues: MLDSKLLRTELDETAEKLARRGFKLDVETLRNLEEQRKSLQVKTEELQAQRNSRSKSIGQAKAKGDHEEADRIMADVANLGSELDEAKAALAELQQQIEDIALSVPNIPDDSVPLGKDENENVEVLRWGTPLAYDFEVKDHVDLGEMADGLDFASAVKISGSRFIVMKGQFARLHRALSQFMLDLHTEEHGYTEMYVPYLVNPDSLFGTGQLPKFGEDLFHTSPLTEQVSDVPLKKLSLIPTAEVPVTNMVRDTITDEADMPLKMTAHTPCFRSEAGSYGRDTRGLIRMHQFDKVELVQITKPEDSMAALEELTGHAEKVLQLLELPYRKVVLCTGDMGFGSRKTYDLEVWVPAQETYREISSCSNMWDFQARRMQARFRRKGEKKPELVHTLNGSGLAVGRTMVAILENFQQADGKIAIPQVLRKYMNGVEFIG.

The tract at residues 41 to 70 is disordered; the sequence is QVKTEELQAQRNSRSKSIGQAKAKGDHEEA. The segment covering 49 to 58 has biased composition (polar residues); it reads AQRNSRSKSI. L-serine is bound at residue 242-244; sequence TAE. Residue 273 to 275 participates in ATP binding; it reads RSE. Residue glutamate 296 coordinates L-serine. An ATP-binding site is contributed by 360-363; the sequence is EISS. Serine 396 contacts L-serine.

It belongs to the class-II aminoacyl-tRNA synthetase family. Type-1 seryl-tRNA synthetase subfamily. In terms of assembly, homodimer. The tRNA molecule binds across the dimer.

Its subcellular location is the cytoplasm. The catalysed reaction is tRNA(Ser) + L-serine + ATP = L-seryl-tRNA(Ser) + AMP + diphosphate + H(+). It carries out the reaction tRNA(Sec) + L-serine + ATP = L-seryl-tRNA(Sec) + AMP + diphosphate + H(+). Its pathway is aminoacyl-tRNA biosynthesis; selenocysteinyl-tRNA(Sec) biosynthesis; L-seryl-tRNA(Sec) from L-serine and tRNA(Sec): step 1/1. Functionally, catalyzes the attachment of serine to tRNA(Ser). Is also able to aminoacylate tRNA(Sec) with serine, to form the misacylated tRNA L-seryl-tRNA(Sec), which will be further converted into selenocysteinyl-tRNA(Sec). The protein is Serine--tRNA ligase of Aliivibrio fischeri (strain ATCC 700601 / ES114) (Vibrio fischeri).